The sequence spans 281 residues: Sulfur carrier protein FdhD (281 aa).

The active-site Cysteine persulfide intermediate is the Cys-117.

Belongs to the FdhD family.

The protein localises to the cytoplasm. Its function is as follows. Required for formate dehydrogenase (FDH) activity. Acts as a sulfur carrier protein that transfers sulfur from IscS to the molybdenum cofactor prior to its insertion into FDH. The sequence is that of Sulfur carrier protein FdhD from Xanthomonas oryzae pv. oryzae (strain MAFF 311018).